The primary structure comprises 282 residues: NADPH-dependent 7-cyano-7-deazaguanine reductase (282 aa).

Position 88–90 (88–90 (IES)) interacts with substrate. 90–91 (SK) contributes to the NADPH binding site. Catalysis depends on cysteine 190, which acts as the Thioimide intermediate. The Proton donor role is filled by aspartate 197. 229–230 (HE) contributes to the substrate binding site. 258–259 (RG) is an NADPH binding site.

The protein belongs to the GTP cyclohydrolase I family. QueF type 2 subfamily. In terms of assembly, homodimer.

The protein localises to the cytoplasm. It carries out the reaction 7-aminomethyl-7-carbaguanine + 2 NADP(+) = 7-cyano-7-deazaguanine + 2 NADPH + 3 H(+). It participates in tRNA modification; tRNA-queuosine biosynthesis. Functionally, catalyzes the NADPH-dependent reduction of 7-cyano-7-deazaguanine (preQ0) to 7-aminomethyl-7-deazaguanine (preQ1). In Escherichia coli O139:H28 (strain E24377A / ETEC), this protein is NADPH-dependent 7-cyano-7-deazaguanine reductase.